A 364-amino-acid polypeptide reads, in one-letter code: Protein Bop (364 aa).

A disordered region spans residues 66–88 (STASGTCGGKPAERGPLAGHMPS). Residues 114-128 (LDRFLAQLGDYMSFH) carry the BH3 motif. The disordered stretch occupies residues 258–364 (QLTKESTPGP…PGEPPLSPGF (107 aa)). 2 stretches are compositionally biased toward pro residues: residues 311-322 (AQRPDPAHPGGP) and 355-364 (PGEPPLSPGF).

Interacts (via BH3 domain) with VDAC1. Interacts with pro-survival Bcl-2 family members, BCL2, BCL2L1 isoform Bcl-X(L), MCL1, BCL2A1 and BCL2L2. Interacts with BAX and BAK1. As to expression, ubiquitously expressed.

The protein resides in the mitochondrion. Its function is as follows. Could induce apoptosis in a BH3 domain-dependent manner. The direct interaction network of Bcl-2 family members may play a key role in modulation RTL10/BOP intrinsic apoptotic signaling activity. This is Protein Bop from Homo sapiens (Human).